We begin with the raw amino-acid sequence, 332 residues long: Formamidase (332 aa).

The 246-residue stretch at 14 to 259 (FLTALIQYPV…WEIVTAEVYP (246 aa)) folds into the CN hydrolase domain. The Proton acceptor role is filled by Glu-60. Catalysis depends on Lys-132, which acts as the Proton donor. The active-site Nucleophile is the Cys-165.

Belongs to the carbon-nitrogen hydrolase superfamily. Aliphatic amidase family.

It catalyses the reaction formamide + H2O = formate + NH4(+). Its function is as follows. Is an aliphatic amidase with a restricted substrate specificity, as it only hydrolyzes formamide. The sequence is that of Formamidase from Bacillus cereus (strain G9842).